We begin with the raw amino-acid sequence, 185 residues long: MVVGLLGGSFDPPHAGHVHISLEALKRFRLDRVWWLVSPGNPLKPRPPAPLPARLAEARRLMRHPRVVVTDIEARLGTRFTAETLAALRARYPGVRFVWLMGADNLAQFHRWDRWQGIMRTVPVGVLARPGAGLRSRTSPAARIYARARVGAADLAAARPPAWCFLNLPMVDLSSTAIRATGRWR.

This sequence belongs to the NadD family.

The catalysed reaction is nicotinate beta-D-ribonucleotide + ATP + H(+) = deamido-NAD(+) + diphosphate. It participates in cofactor biosynthesis; NAD(+) biosynthesis; deamido-NAD(+) from nicotinate D-ribonucleotide: step 1/1. Its function is as follows. Catalyzes the reversible adenylation of nicotinate mononucleotide (NaMN) to nicotinic acid adenine dinucleotide (NaAD). The polypeptide is Probable nicotinate-nucleotide adenylyltransferase (Cereibacter sphaeroides (strain ATCC 17025 / ATH 2.4.3) (Rhodobacter sphaeroides)).